We begin with the raw amino-acid sequence, 143 residues long: MAIERTFSIIKPNAVAKNVIGSIFARFEAAGFKIVGTKMLHLTVEQARGFYAEHDGKPFFDGLVEFMTSGPIVVSVLESENAVQRHRDLLGATNPANALAGTLRADYADSLTENGTHGSDSLESAQREIAFFFGEGEVCPRTR.

ATP-binding residues include K11, F59, R87, T93, R104, and N114. H117 (pros-phosphohistidine intermediate) is an active-site residue.

This sequence belongs to the NDK family. Homotetramer. Mg(2+) serves as cofactor.

The protein localises to the cytoplasm. The enzyme catalyses a 2'-deoxyribonucleoside 5'-diphosphate + ATP = a 2'-deoxyribonucleoside 5'-triphosphate + ADP. It catalyses the reaction a ribonucleoside 5'-diphosphate + ATP = a ribonucleoside 5'-triphosphate + ADP. In terms of biological role, major role in the synthesis of nucleoside triphosphates other than ATP. The ATP gamma phosphate is transferred to the NDP beta phosphate via a ping-pong mechanism, using a phosphorylated active-site intermediate. The sequence is that of Nucleoside diphosphate kinase from Salmonella agona (strain SL483).